A 240-amino-acid chain; its full sequence is Large ribosomal subunit protein bL25 (240 aa).

Disordered regions lie at residues 1-21 (MAENVLSAQKRTEQGKGPARR) and 204-240 (GAAPAAGAAAPAGGAAPAAGAAPAKGGEAKGGDKAKK). The span at 204–229 (GAAPAAGAAAPAGGAAPAAGAAPAKG) shows a compositional bias: low complexity. Over residues 230 to 240 (GEAKGGDKAKK) the composition is skewed to basic and acidic residues.

It belongs to the bacterial ribosomal protein bL25 family. CTC subfamily. As to quaternary structure, part of the 50S ribosomal subunit; part of the 5S rRNA/L5/L18/L25 subcomplex. Contacts the 5S rRNA. Binds to the 5S rRNA independently of L5 and L18.

Functionally, this is one of the proteins that binds to the 5S RNA in the ribosome where it forms part of the central protuberance. The sequence is that of Large ribosomal subunit protein bL25 from Anaeromyxobacter dehalogenans (strain 2CP-1 / ATCC BAA-258).